Reading from the N-terminus, the 451-residue chain is Glucose-6-phosphate isomerase (451 aa).

At Thr38 the chain carries Phosphothreonine. The Proton donor role is filled by Glu290. Catalysis depends on residues His311 and Lys425.

The protein belongs to the GPI family.

The protein resides in the cytoplasm. The catalysed reaction is alpha-D-glucose 6-phosphate = beta-D-fructose 6-phosphate. Its pathway is carbohydrate biosynthesis; gluconeogenesis. The protein operates within carbohydrate degradation; glycolysis; D-glyceraldehyde 3-phosphate and glycerone phosphate from D-glucose: step 2/4. Functionally, catalyzes the reversible isomerization of glucose-6-phosphate to fructose-6-phosphate. The chain is Glucose-6-phosphate isomerase from Shouchella clausii (strain KSM-K16) (Alkalihalobacillus clausii).